The primary structure comprises 152 residues: UPF0225 protein YchJ (152 aa).

It belongs to the UPF0225 family.

In Escherichia coli O7:K1 (strain IAI39 / ExPEC), this protein is UPF0225 protein YchJ.